A 277-amino-acid chain; its full sequence is NH(3)-dependent NAD(+) synthetase (277 aa).

An ATP-binding site is contributed by 36–43 (GLSGGIDS). Asp-42 is a Mg(2+) binding site. A deamido-NAD(+)-binding site is contributed by Arg-118. Thr-138 serves as a coordination point for ATP. Residue Glu-143 coordinates Mg(2+). Positions 167 and 189 each coordinate ATP.

The protein belongs to the NAD synthetase family. In terms of assembly, homodimer.

The enzyme catalyses deamido-NAD(+) + NH4(+) + ATP = AMP + diphosphate + NAD(+) + H(+). Its pathway is cofactor biosynthesis; NAD(+) biosynthesis; NAD(+) from deamido-NAD(+) (ammonia route): step 1/1. Catalyzes the ATP-dependent amidation of deamido-NAD to form NAD. Uses ammonia as a nitrogen source. The polypeptide is NH(3)-dependent NAD(+) synthetase (Chlorobium phaeobacteroides (strain DSM 266 / SMG 266 / 2430)).